The sequence spans 230 residues: Large ribosomal subunit protein uL1 (230 aa).

The protein belongs to the universal ribosomal protein uL1 family. Part of the 50S ribosomal subunit.

Functionally, binds directly to 23S rRNA. The L1 stalk is quite mobile in the ribosome, and is involved in E site tRNA release. Its function is as follows. Protein L1 is also a translational repressor protein, it controls the translation of the L11 operon by binding to its mRNA. The polypeptide is Large ribosomal subunit protein uL1 (Ruminiclostridium cellulolyticum (strain ATCC 35319 / DSM 5812 / JCM 6584 / H10) (Clostridium cellulolyticum)).